The chain runs to 331 residues: Serine/threonine-protein phosphatase 6 catalytic subunit (331 aa).

4 residues coordinate Mn(2+): Asp79, His81, Asp107, and Asn139. His140 (proton donor) is an active-site residue. Mn(2+) is bound by residues His189 and His264.

Belongs to the PPP phosphatase family. PP-6 (PP-V) subfamily. Forms a complex composed of catalytic subunit pph-6 and regulatory subunit saps-1; the interaction increases pph-6 and saps-1 protein stability. It depends on Mn(2+) as a cofactor.

The protein localises to the cytoplasm. It is found in the cell cortex. The protein resides in the cytoskeleton. It localises to the spindle pole. It carries out the reaction O-phospho-L-seryl-[protein] + H2O = L-seryl-[protein] + phosphate. The catalysed reaction is O-phospho-L-threonyl-[protein] + H2O = L-threonyl-[protein] + phosphate. Catalytic subunit of protein phosphatase 6 (PP6). In complex with saps-1, promotes actomyosin contractility during cytokinesis by regulating the organization of cortical non-muscle myosin II nmy-2 and thus contributing to correct spindle positioning. Also required for the proper generation of pulling forces on spindle poles during anaphase by regulating the cortical localization of gpr-1, gpr-2 and lin-5. The polypeptide is Serine/threonine-protein phosphatase 6 catalytic subunit (Caenorhabditis elegans).